A 523-amino-acid chain; its full sequence is Arylsulfatase K (523 aa).

Residues Met1–Cys16 form the signal peptide. Ca(2+)-binding residues include Asp35 and Cys75. The active-site Nucleophile is the Cys75. Cys75 carries the 3-oxoalanine (Cys) modification. Asn103 is a glycosylation site (N-linked (GlcNAc...) asparagine). 2 residues coordinate substrate: Lys123 and His246. N-linked (GlcNAc...) asparagine glycosylation is present at Asn257. Asp308 and His309 together coordinate Ca(2+). An N-linked (GlcNAc...) asparagine glycan is attached at Asn405.

It belongs to the sulfatase family. Requires Ca(2+) as cofactor. The conversion to 3-oxoalanine (also known as C-formylglycine, FGly), of a serine or cysteine residue in prokaryotes and of a cysteine residue in eukaryotes, is critical for catalytic activity.

It is found in the secreted. The protein localises to the lysosome. The catalysed reaction is an aryl sulfate + H2O = a phenol + sulfate + H(+). It carries out the reaction Hydrolysis of the 2-sulfate groups of the 2-O-sulfo-D-glucuronate residues of chondroitin sulfate, heparin and heparitin sulfate.. In terms of biological role, catalyzes the hydrolysis of pseudosubstrates such as p-nitrocatechol sulfate and p-nitrophenyl sulfate. Catalyzes the hydrolysis of the 2-sulfate groups of the 2-O-sulfo-D-glucuronate residues of chondroitin sulfate, heparin and heparitin sulfate. Acts selectively on 2-sulfoglucuronate and lacks activity against 2-sulfoiduronate. The polypeptide is Arylsulfatase K (arsk) (Danio rerio (Zebrafish)).